The chain runs to 308 residues: Palmitoyltransferase ZDHHC7 (308 aa).

Topologically, residues 1 to 50 (MQPSGHRLRDIEHHPLLTDNDNYDSASSSSSETDMADRVWFIRDGCGMVC) are cytoplasmic. Residues 51 to 71 (AVMTWLLVVYADFVVTFVMLL) traverse the membrane as a helical segment. Residues 72–75 (PSKD) lie on the Lumenal side of the membrane. Residues 76-96 (FWYSVVNGVLFNCLAVLALSS) traverse the membrane as a helical segment. At 97 to 173 (HLRTMLTDPG…NNCVGEKNQR (77 aa)) the chain is on the cytoplasmic side. The region spanning 130–180 (YKCPKCCCIKPERAHHCSICKRCIRKMDHHCPWVNNCVGEKNQRFFVLFTM) is the DHHC domain. Cys-160 functions as the S-palmitoyl cysteine intermediate in the catalytic mechanism. A helical transmembrane segment spans residues 174-194 (FFVLFTMYIALSSVHALILCG). At 195–217 (LQFISCVRGQWTECSDFSPPITV) the chain is on the lumenal side. A helical transmembrane segment spans residues 218-238 (ILLVFLCLEGLLFFTFTAVMF). The Cytoplasmic segment spans residues 239–308 (GTQIHSICND…TRKGGPEFSV (70 aa)).

It belongs to the DHHC palmitoyltransferase family. As to quaternary structure, homooligomers. Heterooligomers with ZDHHC3. Autopalmitoylated. In terms of tissue distribution, ubiquitously expressed, with highest levels in liver, kidney and brain. Expressed in all brain regions.

It localises to the golgi apparatus membrane. It carries out the reaction L-cysteinyl-[protein] + hexadecanoyl-CoA = S-hexadecanoyl-L-cysteinyl-[protein] + CoA. The catalysed reaction is L-cysteinyl-[protein] + tetradecanoyl-CoA = S-tetradecanoyl-L-cysteinyl-[protein] + CoA. It catalyses the reaction L-cysteinyl-[protein] + octadecanoyl-CoA = S-octadecanoyl-L-cysteinyl-[protein] + CoA. Golgi-localized palmitoyltransferase that catalyzes the addition of palmitate onto various protein substrates and therefore functions in several unrelated biological processes. Has no stringent fatty acid selectivity and in addition to palmitate can also transfer onto target proteins myristate from tetradecanoyl-CoA and stearate from octadecanoyl-CoA. Palmitoylates sex steroid hormone receptors, including ESR1, PGR and AR, thereby regulating their targeting to the plasma membrane and their function in rapid intracellular signaling upon binding of sex hormones. Palmitoylates GNAQ, a heterotrimeric G protein, regulating its dynamic localization at the plasma membrane and is thereby involved in GNAQ-dependent G protein-coupled receptor signaling pathways. Also functions in ligand-induced cell death by regulating the FAS signaling pathway through the palmitoylation and stabilization of the receptor at the plasma membrane. In epithelial cells, palmitoylates SCRIB and regulates its localization to the plasma membrane, regulating indirectly cell polarity and differentiation. Also palmitoylates JAM3 and promotes its expression at tight junctions and regulates its function in cell migration. Palmitoylates the glucose transporter GLUT4/SLC2A4 and controls the insulin-dependent translocation of GLUT4 to the plasma membrane. In brain, could also palmitoylate SNAP25 and DLG4/PSD95. Could also palmitoylate DNAJC5 and regulate its localization to the Golgi membrane. Could also palmitoylate NCDN. May play a role in follicle stimulation hormone (FSH) activation of testicular Sertoli cells. Activates pyroptosis by catalyzing palmitoylation of gasdermin-D (GSDMD). The protein is Palmitoyltransferase ZDHHC7 of Mus musculus (Mouse).